A 492-amino-acid chain; its full sequence is Cytochrome P450 2B12 (492 aa).

Ser-129 is subject to Phosphoserine. Residue Cys-437 coordinates heme.

The protein belongs to the cytochrome P450 family. Heme is required as a cofactor. As to expression, preputial gland, but not in liver.

It localises to the endoplasmic reticulum membrane. Its subcellular location is the microsome membrane. The catalysed reaction is an organic molecule + reduced [NADPH--hemoprotein reductase] + O2 = an alcohol + oxidized [NADPH--hemoprotein reductase] + H2O + H(+). Its function is as follows. Cytochromes P450 are a group of heme-thiolate monooxygenases. In liver microsomes, this enzyme is involved in an NADPH-dependent electron transport pathway. This isozyme seems responsible for metabolism of 2,2',4,4',5,5'-hexachlorobiphenyl. This chain is Cytochrome P450 2B12 (Cyp2b12), found in Rattus norvegicus (Rat).